The chain runs to 1339 residues: DNA-directed RNA polymerase subunit beta'' (1339 aa).

Zn(2+) is bound by residues C226, C299, C306, and C309.

This sequence belongs to the RNA polymerase beta' chain family. RpoC2 subfamily. In plastids the minimal PEP RNA polymerase catalytic core is composed of four subunits: alpha, beta, beta', and beta''. When a (nuclear-encoded) sigma factor is associated with the core the holoenzyme is formed, which can initiate transcription. The cofactor is Zn(2+).

Its subcellular location is the plastid. It localises to the chloroplast. It carries out the reaction RNA(n) + a ribonucleoside 5'-triphosphate = RNA(n+1) + diphosphate. Its function is as follows. DNA-dependent RNA polymerase catalyzes the transcription of DNA into RNA using the four ribonucleoside triphosphates as substrates. In Cycas taitungensis (Prince sago), this protein is DNA-directed RNA polymerase subunit beta''.